The chain runs to 108 residues: Large ribosomal subunit protein uL23 (108 aa).

This sequence belongs to the universal ribosomal protein uL23 family. In terms of assembly, part of the 50S ribosomal subunit. Contacts protein L29, and trigger factor when it is bound to the ribosome.

One of the early assembly proteins it binds 23S rRNA. One of the proteins that surrounds the polypeptide exit tunnel on the outside of the ribosome. Forms the main docking site for trigger factor binding to the ribosome. The chain is Large ribosomal subunit protein uL23 from Albidiferax ferrireducens (strain ATCC BAA-621 / DSM 15236 / T118) (Rhodoferax ferrireducens).